The primary structure comprises 317 residues: Carbonic anhydrase 6 (317 aa).

The N-terminal stretch at 1 to 17 is a signal peptide; it reads MRALVSVVSLFFLGIQA. Positions 19-277 constitute an Alpha-carbonic anhydrase domain; that stretch reads SDWSYSGDDG…NNHRVVEANF (259 aa). An intrachain disulfide couples cysteine 41 to cysteine 223. Histidine 84 functions as the Proton donor/acceptor in the catalytic mechanism. Residues histidine 110, histidine 112, and histidine 137 each coordinate Zn(2+). 219–220 serves as a coordination point for substrate; sequence TT. N-linked (GlcNAc...) asparagine glycosylation occurs at asparagine 255.

It belongs to the alpha-carbonic anhydrase family. Requires Zn(2+) as cofactor. As to expression, major constituent of saliva.

The protein localises to the secreted. It catalyses the reaction hydrogencarbonate + H(+) = CO2 + H2O. In terms of biological role, reversible hydration of carbon dioxide. Its role in saliva is unknown. The sequence is that of Carbonic anhydrase 6 (Ca6) from Mus musculus (Mouse).